The primary structure comprises 278 residues: Envelope glycoprotein L (278 aa).

A signal peptide spans 1 to 30 (MCRRPDCGFSFSPGPVVLLWCCLLLPIVSS). The gL betaherpesvirus-type domain occupies 43-256 (VPAECPELTR…DKYYAGLPPE (214 aa)). A disulfide bond links Cys-154 and Cys-159.

It belongs to the herpesviridae glycoprotein L (gL) family. Betaherpesvirinae gL subfamily. Interacts with glycoprotein H (gH); this interaction is necessary for the correct processing and cell surface expression of gH. Forms the envelope pentamer complex (PC) composed of gH, gL, UL128, UL130, and UL131A. The pentamer interacts with host NRP2. Forms the envelope trimer complex composed of gH, gL, and gO. The trimer interacts with host PDGFRA. The trimer also interacts with host EPHA2.

The protein localises to the virion membrane. It localises to the host cell membrane. The protein resides in the host Golgi apparatus. It is found in the host trans-Golgi network. Functionally, the heterodimer glycoprotein H-glycoprotein L is required for the fusion of viral and plasma membranes leading to virus entry into the host cell. Acts as a functional inhibitor of gH and maintains gH in an inhibited form. Upon binding to host integrins, gL dissociates from gH leading to activation of the viral fusion glycoproteins gB and gH. In human cytomegalovirus, forms two distincts complexes to mediate viral entry, a trimer and a pentamer at the surface of the virion envelope. The gH-gL-gO trimer is required for infection in fibroblasts by interacting with host PDGFRA, and in glioblastoma cells by interacting with host EPHA2. The gH-gL-UL128-UL130-UL131A pentamer is essential for viral entry in epithelial, endothelial and myeloid cells via interaction with host NRP2. The chain is Envelope glycoprotein L from Homo sapiens (Human).